A 289-amino-acid chain; its full sequence is DegV domain-containing protein YteA (289 aa).

Residues 3-284 enclose the DegV domain; that stretch reads FQIMTDSTAD…DGTIAIFSIS (282 aa). Positions 62 and 94 each coordinate hexadecanoate.

Functionally, may bind long-chain fatty acids, such as palmitate, and may play a role in lipid transport or fatty acid metabolism. This chain is DegV domain-containing protein YteA (yteA), found in Lactococcus lactis subsp. lactis (strain IL1403) (Streptococcus lactis).